The following is a 222-amino-acid chain: Probable nicotinate-nucleotide adenylyltransferase (222 aa).

It belongs to the NadD family.

It catalyses the reaction nicotinate beta-D-ribonucleotide + ATP + H(+) = deamido-NAD(+) + diphosphate. Its pathway is cofactor biosynthesis; NAD(+) biosynthesis; deamido-NAD(+) from nicotinate D-ribonucleotide: step 1/1. Functionally, catalyzes the reversible adenylation of nicotinate mononucleotide (NaMN) to nicotinic acid adenine dinucleotide (NaAD). The polypeptide is Probable nicotinate-nucleotide adenylyltransferase (Xylella fastidiosa (strain M23)).